Consider the following 451-residue polypeptide: tRNA modification GTPase MnmE (451 aa).

Residues Arg-28, Glu-85, and Lys-124 each coordinate (6S)-5-formyl-5,6,7,8-tetrahydrofolate. The TrmE-type G domain occupies 220–373; the sequence is GLYTVLVGPP…LKTRLRTLLL (154 aa). Asn-230 contributes to the K(+) binding site. Residues 230 to 235, 249 to 255, and 274 to 277 each bind GTP; these read NVGKSS, TDVPGTT, and DTAG. Ser-234 lines the Mg(2+) pocket. K(+) contacts are provided by Thr-249, Val-251, and Thr-254. Thr-255 contacts Mg(2+). (6S)-5-formyl-5,6,7,8-tetrahydrofolate is bound at residue Lys-451.

The protein belongs to the TRAFAC class TrmE-Era-EngA-EngB-Septin-like GTPase superfamily. TrmE GTPase family. As to quaternary structure, homodimer. Heterotetramer of two MnmE and two MnmG subunits. K(+) is required as a cofactor.

It localises to the cytoplasm. Exhibits a very high intrinsic GTPase hydrolysis rate. Involved in the addition of a carboxymethylaminomethyl (cmnm) group at the wobble position (U34) of certain tRNAs, forming tRNA-cmnm(5)s(2)U34. The chain is tRNA modification GTPase MnmE from Xylella fastidiosa (strain 9a5c).